Reading from the N-terminus, the 439-residue chain is uncharacterized protein (439 aa).

This is an uncharacterized protein from Caenorhabditis elegans.